The chain runs to 408 residues: Peptidase T (408 aa).

Zn(2+) is bound at residue histidine 78. The active site involves aspartate 80. Aspartate 140 lines the Zn(2+) pocket. Catalysis depends on glutamate 173, which acts as the Proton acceptor. Zn(2+) contacts are provided by glutamate 174, aspartate 196, and histidine 379.

It belongs to the peptidase M20B family. It depends on Zn(2+) as a cofactor.

It localises to the cytoplasm. It carries out the reaction Release of the N-terminal residue from a tripeptide.. Its function is as follows. Cleaves the N-terminal amino acid of tripeptides. The sequence is that of Peptidase T from Shigella flexneri serotype 5b (strain 8401).